A 174-amino-acid chain; its full sequence is Crossover junction endodeoxyribonuclease RuvC (174 aa).

Catalysis depends on residues Asp8, Glu67, and Asp139. 3 residues coordinate Mg(2+): Asp8, Glu67, and Asp139.

Belongs to the RuvC family. Homodimer which binds Holliday junction (HJ) DNA. The HJ becomes 2-fold symmetrical on binding to RuvC with unstacked arms; it has a different conformation from HJ DNA in complex with RuvA. In the full resolvosome a probable DNA-RuvA(4)-RuvB(12)-RuvC(2) complex forms which resolves the HJ. Mg(2+) is required as a cofactor.

The protein resides in the cytoplasm. The enzyme catalyses Endonucleolytic cleavage at a junction such as a reciprocal single-stranded crossover between two homologous DNA duplexes (Holliday junction).. Functionally, the RuvA-RuvB-RuvC complex processes Holliday junction (HJ) DNA during genetic recombination and DNA repair. Endonuclease that resolves HJ intermediates. Cleaves cruciform DNA by making single-stranded nicks across the HJ at symmetrical positions within the homologous arms, yielding a 5'-phosphate and a 3'-hydroxyl group; requires a central core of homology in the junction. The consensus cleavage sequence is 5'-(A/T)TT(C/G)-3'. Cleavage occurs on the 3'-side of the TT dinucleotide at the point of strand exchange. HJ branch migration catalyzed by RuvA-RuvB allows RuvC to scan DNA until it finds its consensus sequence, where it cleaves and resolves the cruciform DNA. This is Crossover junction endodeoxyribonuclease RuvC from Pseudomonas putida (strain W619).